Here is a 135-residue protein sequence, read N- to C-terminus: Inner membrane protein YgfX (135 aa).

Topologically, residues 1–11 (MVLWQSDLRVS) are cytoplasmic. The interval 1-96 (MVLWQSDLRV…APWMIKSGMM (96 aa)) is not required to inhibit FtsZ or MreB polymerization. The helical transmembrane segment at 12 to 32 (WRAQWLSLLIHGLVAAVILLM) threads the bilayer. Over 33–37 (PWPLS) the chain is Periplasmic. A helical membrane pass occupies residues 38–54 (YTPLWMVLLSLVVFDCV). Residues 55-135 (RSQRRINARQ…RILLQQETQR (81 aa)) are Cytoplasmic-facing.

Interacts with MreB and FtsZ; interaction with the latter requires FtsZ residues 33-49.

It is found in the cell inner membrane. In terms of biological role, a probable inner membrane protein. Has been shown not to be a toxin, no effects on growth are seen in LB or minimal medium up to 6 or 21 hours (respectively) after induction of expression. Interacts with cytoskeletal proteins FtsZ and MreB; inhibits FtsZ GTP-dependent polymerization as well as MreB ATP-dependent polymerization. Restores production of prodigiosin antibiotic (Pig) in Serratia strains with deletions of sdhE-ygfX; overexpression of this protein and CptB also restores Pig production to a slightly lesser extent in Serratia. In Escherichia coli (strain K12), this protein is Inner membrane protein YgfX.